The primary structure comprises 366 residues: D-alanine--D-alanine ligase (366 aa).

Residues 140-346 form the ATP-grasp domain; it reads KALFAQSDLP…YGELLSRLVD (207 aa). 173–228 provides a ligand contact to ATP; the sequence is EDRLGYPCFVKPANMGSSVGISKATNRAELVAAFDDAVRYDRKLIVEKGINVREIE. D299, E313, and N315 together coordinate Mg(2+).

Belongs to the D-alanine--D-alanine ligase family. Mg(2+) serves as cofactor. Requires Mn(2+) as cofactor.

The protein localises to the cytoplasm. The catalysed reaction is 2 D-alanine + ATP = D-alanyl-D-alanine + ADP + phosphate + H(+). Its pathway is cell wall biogenesis; peptidoglycan biosynthesis. Its function is as follows. Cell wall formation. The chain is D-alanine--D-alanine ligase from Heliobacterium modesticaldum (strain ATCC 51547 / Ice1).